Here is a 503-residue protein sequence, read N- to C-terminus: Protein DETOXIFICATION 36 (503 aa).

A run of 12 helical transmembrane segments spans residues 54-74 (LFHL…MSML), 87-107 (LAAA…LMLG), 137-157 (IVLV…KPLL), 166-186 (VASV…AYAV), 203-223 (SAYI…LSVF), 225-245 (FGWG…IIVL), 271-293 (GLWD…SWYS), 313-333 (LAIC…FNAA), 355-375 (AVTT…ILSW), 399-419 (FLAI…VAVG), 427-447 (AYVN…VLGF), and 456-476 (IWTG…IVTF).

This sequence belongs to the multi antimicrobial extrusion (MATE) (TC 2.A.66.1) family.

The protein localises to the membrane. The protein is Protein DETOXIFICATION 36 of Arabidopsis thaliana (Mouse-ear cress).